Reading from the N-terminus, the 123-residue chain is Small ribosomal subunit protein uS12c (123 aa).

This sequence belongs to the universal ribosomal protein uS12 family. Part of the 30S ribosomal subunit.

The protein resides in the plastid. It is found in the chloroplast. Its function is as follows. With S4 and S5 plays an important role in translational accuracy. Located at the interface of the 30S and 50S subunits. This is Small ribosomal subunit protein uS12c (rps12) from Pinus thunbergii (Japanese black pine).